A 164-amino-acid chain; its full sequence is SsrA-binding protein (164 aa).

Positions 143 to 164 (HDKRQDEKQKSIKKEINSVLKR) are disordered. A compositionally biased stretch (basic and acidic residues) spans 145–158 (KRQDEKQKSIKKEI).

Belongs to the SmpB family.

Its subcellular location is the cytoplasm. Functionally, required for rescue of stalled ribosomes mediated by trans-translation. Binds to transfer-messenger RNA (tmRNA), required for stable association of tmRNA with ribosomes. tmRNA and SmpB together mimic tRNA shape, replacing the anticodon stem-loop with SmpB. tmRNA is encoded by the ssrA gene; the 2 termini fold to resemble tRNA(Ala) and it encodes a 'tag peptide', a short internal open reading frame. During trans-translation Ala-aminoacylated tmRNA acts like a tRNA, entering the A-site of stalled ribosomes, displacing the stalled mRNA. The ribosome then switches to translate the ORF on the tmRNA; the nascent peptide is terminated with the 'tag peptide' encoded by the tmRNA and targeted for degradation. The ribosome is freed to recommence translation, which seems to be the essential function of trans-translation. The chain is SsrA-binding protein from Prochlorococcus marinus (strain MIT 9312).